Consider the following 178-residue polypeptide: Inner membrane-spanning protein YciB (178 aa).

A run of 5 helical transmembrane segments spans residues 12-32, 50-70, 74-94, 120-140, and 145-165; these read LFFA…VAIV, PMQW…LVLH, FIMW…LISD, LTFA…FVAF, and AVWV…FVLA.

This sequence belongs to the YciB family.

It localises to the cell inner membrane. In terms of biological role, plays a role in cell envelope biogenesis, maintenance of cell envelope integrity and membrane homeostasis. This chain is Inner membrane-spanning protein YciB, found in Laribacter hongkongensis (strain HLHK9).